A 1358-amino-acid polypeptide reads, in one-letter code: MSHSSHYSPVDSGMVPSSSSTEDHLSPTLSASIVLPAQLNPFAKAYDIPPSSIVQLGWALLLRCHLAIPSPCWSTIDDKTMPRGSDTHALQWESLHLEEGRSISWILQRWEDPSVHWYLSSDQLPGSKSPTLTTMLFLVKEYGLFDPVTPIDPGMGTIIYFYPSDEQPRLHISWNPDVVSSGHAFHLTRSLEHALQTIFLAPSVDIRDVNLFGIWDHQQLLQWNSYCPDPVDRLVQEMFQDVVAATPEASAVAAWDGELNYRELDRLSSRLAGVLQSDFGVVSETIVALCFEKSVWAIVAMLAVVKAGGAFLHIDPQHPPARHQAMIKSTASKLFLCSEQTRDTVVRSVPDCPSLVIHREMFAAQPDHAQQDTVISSGNLGPTNAAYVVCTSGSTGTPKAIVVEHVSLCSSVTAQAKAMDITAGSRVLQYAAYTFDVSIGDIFAALTHGACICIPSNWERAHDLSGAINRLGVNQACLTSTVASLLTPVEVPKLKKLTLGGEPATQQCINMWVDKVALKNIYGPAECTVWCIIQPDVSSGIAVSNIGHAIGARAWIVHPENHDRLMPIGAVGELLIEGPLVARGYLNDPVRTNAVFLAQPPIWLASFGPPPPRSRFYKTGDLARYGPGGALLFEGRKDTQVKLRGQRIELGEVEYRLHQALSDLSPSAAVELVHPKESTAPLLCAFITWDEGIDLDLQPAKPPLSACLTPNARKRFNHTVSLLQTEMERTLPAYMIPGLCIPVHKLPLTTSGKLDRKALRYFCTQHSLAFLSTFENNNVNSPTDGATDSFAAPLETVSPAESTLAQLWAQVLGRKTDSIGRKDNFLSLGGDSLAAMRLVNRAARDAQLTLTVADVFKCPVLADQASLVRPLVQTRNLVPFELMAPGDLQIEDLVAYVAEKCGVLHDQVEDIYPCTPLQDEMMRDSLSGDRTQMGQEVILLAEDLDIPRYLSACARVFQRFPILRTRFVQHSDRLIQVVIRENLGWQRPESLTEYVEADAKEAPALNKPLTRWALTSDSTHCILTMHHSIFDGISLGHILGAIYAVYQSIPLPPDSVSFAAFLAQINEHTSGLSDDSKQFWRSYLRPSPGSGDLPLPIVDSTYRPCANRGTQRLVTFQSGVVPALQQHGLTEATLIRGAWACTLAQLQTSSSTPSDVVFGTILTGRNLHLPGVDALVAPTLTHAPIRIRMSAASNEKPASFLARVQADATAMIPFEHDGMDRIRAIDAQVRAVCDQMQTLLVIQPIPEGLTSASTSPFPGPILSGPRVEAREMRHFHWYGLLVECTLLPTNGFFVRMCYDDKLFSSEDVERLLDDYSQALHELGGGLTEGEEVHLPTERKLDTLTLPGLVAPSGAEDMV.

A disordered region spans residues methionine 1–aspartate 23. Residues tyrosine 261–glutamine 659 form an adenylation region. One can recognise a Carrier domain in the interval glutamate 795 to valine 872. Residue serine 832 is modified to O-(pantetheine 4'-phosphoryl)serine. The condensation stretch occupies residues glutamate 909–leucine 1322.

It belongs to the NRP synthetase family. Pantetheine 4'-phosphate serves as cofactor.

The catalysed reaction is restrictinol + glycine + H(+) = restricticin + H2O. It functions in the pathway antifungal biosynthesis. Nonribosomal peptide synthetase; part of the gene cluster that mediates the biosynthesis of the tetrahydropyranyl antifungal agent restricticin that acts as an inhibitor of CYP51 and blocks the ergosterol biosynthesis. Within the pathway, rstn8 catalyzes the C3 esterification of restrictinol with glycine to yield restricticin. Rstn8 represents an example of the emerging class of single-module NRPS-like enzymes that perform esterification reactions. Rstn8 displays strict substrate specificity toward glycine as no other natural amino acid is accepted. Rstn8 does not recognize desmethylrestrictinol as a substrate, demonstrating that rstn1-catalyzed methylation, possibly protecting the C4-OH, must precede the final esterification step. The highly reducing polyketide synthase rstn3, the short chain dehydrogenase rstn4, the cyclase rstn5, the FAD-dependent monooxygenase rstn6 and the enoylreductase rstn7 are required to generate the first stable intermediate desmethylrestrictinol. Rstn3 with rstn7 biosynthesize the first polyketide chain intermediate that is reduced by rstn4, followed by epoxidation by rstn6 before 6-endo cyclization via epoxide opening by rstn5 leads to desmethylrestrictinol. The methyltransferase rstn1 then catalyzes the C4 O-methylation of desmethylrestrictinol to produce restrictinol, and the nonribosomal peptide synthetase rstn8 catalyzes the C3 esterification of restrictinol with glycine that leads to restricticin. The sequence is that of Nonribosomal peptide synthetase rstn8 from Aspergillus nomiae NRRL (strain ATCC 15546 / NRRL 13137 / CBS 260.88 / M93).